The sequence spans 144 residues: DAEPPSPAEECAAVKMESCGDDWLYIDENRKVKYFETPKTFQEAQDHCESEDGNLVAMHTEFQKYVVACLSWIYNHKLHRMWIGAGRSEGETQNIDGSDFDYAKWKGGQPDNFGGNEDCIEANFIDWGYLNDVECSEKLPFMCA.

Positions 27–144 (DENRKVKYFE…CSEKLPFMCA (118 aa)) constitute a C-type lectin domain. Disulfide bonds link C48-C143 and C119-C135.

Belongs to the true venom lectin family. In terms of processing, glycosylated with a carbohydrate of 383 Da. As to expression, expressed by the venom gland.

It is found in the secreted. In terms of biological role, the role of this hemagglutinin in the venom is unknown, because it is masked by the high venom hemolytic activity. Lectin with specificity to galactose. Induces hemagglutination. This Scorpaena plumieri (Spotted scorpionfish) protein is C-type isolectin Sp-CL4.